The sequence spans 302 residues: Putative S-adenosyl-L-methionine-dependent methyltransferase MRA_0290 (302 aa).

S-adenosyl-L-methionine is bound by residues aspartate 126 and 155 to 156; that span reads DL.

Belongs to the UPF0677 family.

Functionally, exhibits S-adenosyl-L-methionine-dependent methyltransferase activity. The sequence is that of Putative S-adenosyl-L-methionine-dependent methyltransferase MRA_0290 from Mycobacterium tuberculosis (strain ATCC 25177 / H37Ra).